The following is a 251-amino-acid chain: Pantothenate synthetase (251 aa).

Residue 28–35 (MGALHTGH) participates in ATP binding. Catalysis depends on His35, which acts as the Proton donor. (R)-pantoate is bound at residue Gln59. Beta-alanine is bound at residue Gln59. 145 to 148 (GEKD) provides a ligand contact to ATP. Gln151 provides a ligand contact to (R)-pantoate. Residues Val174 and 182 to 185 (KSSR) each bind ATP.

Belongs to the pantothenate synthetase family. In terms of assembly, homodimer.

The protein localises to the cytoplasm. It catalyses the reaction (R)-pantoate + beta-alanine + ATP = (R)-pantothenate + AMP + diphosphate + H(+). It functions in the pathway cofactor biosynthesis; (R)-pantothenate biosynthesis; (R)-pantothenate from (R)-pantoate and beta-alanine: step 1/1. In terms of biological role, catalyzes the condensation of pantoate with beta-alanine in an ATP-dependent reaction via a pantoyl-adenylate intermediate. This chain is Pantothenate synthetase, found in Bdellovibrio bacteriovorus (strain ATCC 15356 / DSM 50701 / NCIMB 9529 / HD100).